The following is a 741-amino-acid chain: Double-stranded RNA-specific editase 1 (741 aa).

Residues 1 to 79 (MDIEDEENMS…RRKTPGPVLP (79 aa)) are disordered. Ser-26 is modified (phosphoserine). Residues 33-49 (PGPGEGSQLSNGGGGGP) show a composition bias toward gly residues. The span at 63–73 (SKYRLKKRRKT) shows a compositional bias: basic residues. One can recognise a DRBM 1 domain in the interval 78–144 (LPKNALMQLN…AEKALRSFVQ (67 aa)). Interaction with substrate RNA stretches follow at residues 83–88 (LMQLNE) and 104–105 (VH). The residue at position 149 (Ser-149) is a Phosphoserine. The region spanning 231 to 298 (PSGKNPVMIL…AQSALAAIFN (68 aa)) is the DRBM 2 domain. Interaction with substrate RNA regions lie at residues 237–242 (VMILNE) and His-259. The region spanning 370-737 (SVSTGTKCIN…VEKPTEQDQF (368 aa)) is the A to I editase domain. His-394 provides a ligand contact to Zn(2+). The active-site Proton donor is Glu-396. The 1D-myo-inositol hexakisphosphate site is built by Arg-400 and Arg-401. Residue Cys-451 coordinates Zn(2+). The tract at residues 486–518 (RPPGLLSDPSTSTFQGAGTTEPADRHPNRKARG) is disordered. The span at 493–503 (DPSTSTFQGAG) shows a compositional bias: polar residues. Cys-556 lines the Zn(2+) pocket. Positions 559, 562, 669, 702, 712, and 730 each coordinate 1D-myo-inositol hexakisphosphate.

As to quaternary structure, homodimer. Homodimerization is essential for its catalytic activity. Can form heterodimers with isoform 5 of ADAR/ADAR1. It depends on 1D-myo-inositol hexakisphosphate as a cofactor. As to expression, highly expressed in brain and heart and at lower levels in placenta. Fair expression in lung, liver and kidney. Detected in brain, heart, kidney, lung and liver (at protein level). Highly expressed in hippocampus and colon. Expressed in pediatric astrocytomas and the protein has a decreased RNA-editing activity. The decrease in RNA editing correlates with the grade of malignancy of the tumors, with the high grade tumors showing lower editing is seen.

It is found in the nucleus. Its subcellular location is the nucleolus. It carries out the reaction adenosine in double-stranded RNA + H2O + H(+) = inosine in double-stranded RNA + NH4(+). Catalyzes the hydrolytic deamination of adenosine to inosine in double-stranded RNA (dsRNA) referred to as A-to-I RNA editing. This may affect gene expression and function in a number of ways that include mRNA translation by changing codons and hence the amino acid sequence of proteins; pre-mRNA splicing by altering splice site recognition sequences; RNA stability by changing sequences involved in nuclease recognition; genetic stability in the case of RNA virus genomes by changing sequences during viral RNA replication; and RNA structure-dependent activities such as microRNA production or targeting or protein-RNA interactions. Can edit both viral and cellular RNAs and can edit RNAs at multiple sites (hyper-editing) or at specific sites (site-specific editing). Its cellular RNA substrates include: bladder cancer-associated protein (BLCAP), neurotransmitter receptors for glutamate (GRIA2 and GRIK2) and serotonin (HTR2C), GABA receptor (GABRA3) and potassium voltage-gated channel (KCNA1). Site-specific RNA editing of transcripts encoding these proteins results in amino acid substitutions which consequently alter their functional activities. Edits GRIA2 at both the Q/R and R/G sites efficiently but converts the adenosine in hotspot1 much less efficiently. Can exert a proviral effect towards human immunodeficiency virus type 1 (HIV-1) and enhances its replication via both an editing-dependent and editing-independent mechanism. The former involves editing of adenosines in the 5'UTR while the latter occurs via suppression of EIF2AK2/PKR activation and function. Can inhibit cell proliferation and migration and can stimulate exocytosis. In terms of biological role, has a lower catalytic activity than isoform 2. Functionally, has a higher catalytic activity than isoform 1. This Homo sapiens (Human) protein is Double-stranded RNA-specific editase 1.